Consider the following 481-residue polypeptide: Small ribosomal subunit protein bS1 (481 aa).

4 S1 motif domains span residues 36 to 105, 123 to 188, 209 to 277, and 294 to 363; these read GDIV…LSKK, DEAV…LSRR, GTIR…LSLK, and GQIV…LSLK. Positions 429 to 467 are disordered; the sequence is TAQMEKFAAAEAAGRGADDQSSASSAPSEKTAGGSLASD. Low complexity predominate over residues 437 to 456; that stretch reads AAEAAGRGADDQSSASSAPS.

This sequence belongs to the bacterial ribosomal protein bS1 family.

Functionally, binds mRNA; thus facilitating recognition of the initiation point. It is needed to translate mRNA with a short Shine-Dalgarno (SD) purine-rich sequence. This chain is Small ribosomal subunit protein bS1 (rpsA), found in Mycobacterium tuberculosis (strain CDC 1551 / Oshkosh).